The chain runs to 333 residues: T-cell surface glycoprotein CD1b (333 aa).

The first 18 residues, 1–18, serve as a signal peptide directing secretion; it reads MLLLPFQLLAVLFPGGNS. Over 19–303 the chain is Extracellular; that stretch reads EHAFQGPTSF…YWSNPTSIGS (285 aa). N38, N75, and N146 each carry an N-linked (GlcNAc...) asparagine glycan. 3 cysteine pairs are disulfide-bonded: C120/C184, C149/C163, and C224/C279. An Ig-like domain is found at 185-295; the sequence is PRYLLGVLNA…LEGQDIILYW (111 aa). N258 carries N-linked (GlcNAc...) asparagine glycosylation. Residues 304 to 324 form a helical membrane-spanning segment; it reads IVLAIIVPSLLLLLCLALWYM. Over 325–333 the chain is Cytoplasmic; sequence RRRSYQNIP. The Internalization signal motif lies at 329-332; the sequence is YQNI.

As to quaternary structure, heterodimer with B2M (beta-2-microglobulin). Interacts with saposin C. Expressed in lymphocytes, spleen, lung, liver, kidney and heart.

It localises to the cell membrane. Its subcellular location is the endosome membrane. It is found in the lysosome membrane. Antigen-presenting protein that binds self and non-self lipid and glycolipid antigens and presents them to T-cell receptors on natural killer T-cells. The sequence is that of T-cell surface glycoprotein CD1b (CD1B) from Aotus nancymaae (Ma's night monkey).